The chain runs to 251 residues: MNLGIIGYGNIGELLSQNIISHDFCNLNKLYIANRTLSKINHLKDIDPRISITDDNIEVAKTCEKIIISVKTPDLAIVLDPLKPHITKNQQIIHTCAGTDLEFKDCGLSCVIPTISSTYDEDNPKKGVSIIMHDENVSGENREFVEKLFSKFSQIKVVDSPMDLEIATIAASCMPAFIALGVDLFAGELEEKCNLSKEETFKILAETLNSTAYILKEDIYSPDELINKVATKNGITQKGLDVLDKRPARYL.

The protein belongs to the pyrroline-5-carboxylate reductase family.

The protein localises to the cytoplasm. The enzyme catalyses L-proline + NADP(+) = (S)-1-pyrroline-5-carboxylate + NADPH + 2 H(+). The catalysed reaction is L-proline + NAD(+) = (S)-1-pyrroline-5-carboxylate + NADH + 2 H(+). Its pathway is amino-acid biosynthesis; L-proline biosynthesis; L-proline from L-glutamate 5-semialdehyde: step 1/1. Its function is as follows. Catalyzes the reduction of 1-pyrroline-5-carboxylate (PCA) to L-proline. This is Pyrroline-5-carboxylate reductase (proC) from Methanobrevibacter smithii.